We begin with the raw amino-acid sequence, 124 residues long: Small ribosomal subunit protein uS10z/uS10x (124 aa).

This sequence belongs to the universal ribosomal protein uS10 family.

This chain is Small ribosomal subunit protein uS10z/uS10x (RPS20A), found in Arabidopsis thaliana (Mouse-ear cress).